The chain runs to 252 residues: 3-dehydroquinate dehydratase (252 aa).

3-dehydroquinate-binding positions include Ser-21, Glu-46–Arg-48, and Arg-82. His-143 serves as the catalytic Proton donor/acceptor. The active-site Schiff-base intermediate with substrate is the Lys-170. 3-dehydroquinate-binding residues include Arg-213, Ser-232, and Gln-236.

It belongs to the type-I 3-dehydroquinase family. In terms of assembly, homodimer.

The catalysed reaction is 3-dehydroquinate = 3-dehydroshikimate + H2O. The protein operates within metabolic intermediate biosynthesis; chorismate biosynthesis; chorismate from D-erythrose 4-phosphate and phosphoenolpyruvate: step 3/7. Involved in the third step of the chorismate pathway, which leads to the biosynthesis of aromatic amino acids. Catalyzes the cis-dehydration of 3-dehydroquinate (DHQ) and introduces the first double bond of the aromatic ring to yield 3-dehydroshikimate. In Escherichia coli O9:H4 (strain HS), this protein is 3-dehydroquinate dehydratase.